The sequence spans 199 residues: Regulator of G-protein signaling 16 (199 aa).

S-palmitoyl cysteine attachment occurs at residues Cys2 and Cys12. Positions 64–180 (SFQSLLNSKN…LKSPAYRDLA (117 aa)) constitute an RGS domain. Phosphotyrosine is present on residues Tyr167 and Tyr176.

As to quaternary structure, interacts with GNAI1 and GNAQ. Interacts with GNAI3, GNAI3 and GNAO1. Post-translationally, palmitoylated on Cys-2 and/or Cys-12. Phosphorylated. Phosphorylation at Tyr-167 by EGFR enhances GTPase accelerating (GAP) activity toward GNAI1. As to expression, predominantly found in the retina. Some expression has been found in the liver.

It localises to the membrane. Its function is as follows. Regulates G protein-coupled receptor signaling cascades. Inhibits signal transduction by increasing the GTPase activity of G protein alpha subunits, thereby driving them into their inactive GDP-bound form. Plays an important role in the phototransduction cascade by regulating the lifetime and effective concentration of activated transducin alpha. May regulate extra and intracellular mitogenic signals. In Rattus norvegicus (Rat), this protein is Regulator of G-protein signaling 16 (Rgs16).